A 290-amino-acid polypeptide reads, in one-letter code: Small ribosomal subunit protein uS2 (290 aa).

Residues 263-282 (ATAGATWEAEAGGDWAAESA) are compositionally biased toward low complexity. The segment at 263–290 (ATAGATWEAEAGGDWAAESAQPNPETKW) is disordered.

It belongs to the universal ribosomal protein uS2 family. Component of the small ribosomal subunit. Mature ribosomes consist of a small (40S) and a large (60S) subunit. The 40S subunit contains about 33 different proteins and 1 molecule of RNA (18S). The 60S subunit contains about 49 different proteins and 3 molecules of RNA (25S, 5.8S and 5S). Interacts with rps21.

It is found in the cytoplasm. Required for the assembly and/or stability of the 40S ribosomal subunit. Required for the processing of the 20S rRNA-precursor to mature 18S rRNA in a late step of the maturation of 40S ribosomal subunits. This is Small ribosomal subunit protein uS2 (rps0) from Talaromyces stipitatus (strain ATCC 10500 / CBS 375.48 / QM 6759 / NRRL 1006) (Penicillium stipitatum).